Here is a 164-residue protein sequence, read N- to C-terminus: Crossover junction endodeoxyribonuclease RuvC (164 aa).

Active-site residues include D7, E67, and D140. Positions 7, 67, and 140 each coordinate Mg(2+).

It belongs to the RuvC family. As to quaternary structure, homodimer which binds Holliday junction (HJ) DNA. The HJ becomes 2-fold symmetrical on binding to RuvC with unstacked arms; it has a different conformation from HJ DNA in complex with RuvA. In the full resolvosome a probable DNA-RuvA(4)-RuvB(12)-RuvC(2) complex forms which resolves the HJ. Requires Mg(2+) as cofactor.

The protein resides in the cytoplasm. It carries out the reaction Endonucleolytic cleavage at a junction such as a reciprocal single-stranded crossover between two homologous DNA duplexes (Holliday junction).. Its function is as follows. The RuvA-RuvB-RuvC complex processes Holliday junction (HJ) DNA during genetic recombination and DNA repair. Endonuclease that resolves HJ intermediates. Cleaves cruciform DNA by making single-stranded nicks across the HJ at symmetrical positions within the homologous arms, yielding a 5'-phosphate and a 3'-hydroxyl group; requires a central core of homology in the junction. The consensus cleavage sequence is 5'-(A/T)TT(C/G)-3'. Cleavage occurs on the 3'-side of the TT dinucleotide at the point of strand exchange. HJ branch migration catalyzed by RuvA-RuvB allows RuvC to scan DNA until it finds its consensus sequence, where it cleaves and resolves the cruciform DNA. The protein is Crossover junction endodeoxyribonuclease RuvC of Alkaliphilus metalliredigens (strain QYMF).